The sequence spans 363 residues: MSNELKKTPLYQTFVDSGAKIVEFGGWAMPVQFSSIKEEHNAVRTEMGLFDVSHMGEIIIKGSDASNLVQYLLSNDTDNVTTHKAQYTALCNEQGGIIDDLITYKLEENVYLLVVNAGNTEKDFEWMYEKAKAFDAEVINVSTEYGQLAIQGPKARDLVQQYVNIDVSEMKPFEFEQNVEFFGKNVILSQSGYTGEDGFEIYCNADDAPYLWDEILKNDVTPCGLGARDTLRLEAGLPLHGQDLSETITPYEAGIAFAAKPLIEADFIGKSVLKDQKENGSKRRTVGLEMIDKGIPRTGYEVYDLDGNQIGEITSGTQSPLTGKSIGLALINRDAFEMGKEVVVQVRKRQVKAKIVKKNQISK.

Belongs to the GcvT family. As to quaternary structure, the glycine cleavage system is composed of four proteins: P, T, L and H.

The catalysed reaction is N(6)-[(R)-S(8)-aminomethyldihydrolipoyl]-L-lysyl-[protein] + (6S)-5,6,7,8-tetrahydrofolate = N(6)-[(R)-dihydrolipoyl]-L-lysyl-[protein] + (6R)-5,10-methylene-5,6,7,8-tetrahydrofolate + NH4(+). Functionally, the glycine cleavage system catalyzes the degradation of glycine. In Staphylococcus saprophyticus subsp. saprophyticus (strain ATCC 15305 / DSM 20229 / NCIMB 8711 / NCTC 7292 / S-41), this protein is Aminomethyltransferase.